The following is a 424-amino-acid chain: UPF0597 protein Sbal223_1296 (424 aa).

Belongs to the UPF0597 family.

The polypeptide is UPF0597 protein Sbal223_1296 (Shewanella baltica (strain OS223)).